Reading from the N-terminus, the 452-residue chain is Adenosylmethionine-8-amino-7-oxononanoate aminotransferase (452 aa).

116–117 (GS) is a pyridoxal 5'-phosphate binding site. Tyr-152 contributes to the substrate binding site. A pyridoxal 5'-phosphate-binding site is contributed by Asp-257. Substrate is bound by residues Lys-286, Gly-321, and Arg-414. Lys-286 carries the N6-(pyridoxal phosphate)lysine modification.

Belongs to the class-III pyridoxal-phosphate-dependent aminotransferase family. BioA subfamily. As to quaternary structure, homodimer. The cofactor is pyridoxal 5'-phosphate.

It localises to the cytoplasm. The catalysed reaction is (8S)-8-amino-7-oxononanoate + S-adenosyl-L-methionine = S-adenosyl-4-methylsulfanyl-2-oxobutanoate + (7R,8S)-7,8-diammoniononanoate. It functions in the pathway cofactor biosynthesis; biotin biosynthesis; 7,8-diaminononanoate from 8-amino-7-oxononanoate (SAM route): step 1/1. Its function is as follows. Catalyzes the transfer of the alpha-amino group from S-adenosyl-L-methionine (SAM) to 7-keto-8-aminopelargonic acid (KAPA) to form 7,8-diaminopelargonic acid (DAPA). It is the only aminotransferase known to utilize SAM as an amino donor. This is Adenosylmethionine-8-amino-7-oxononanoate aminotransferase from Staphylococcus aureus (strain NCTC 8325 / PS 47).